Consider the following 302-residue polypeptide: Methionyl-tRNA formyltransferase (302 aa).

Position 108-111 (108-111) interacts with (6S)-5,6,7,8-tetrahydrofolate; the sequence is SLLP.

It belongs to the Fmt family.

The catalysed reaction is L-methionyl-tRNA(fMet) + (6R)-10-formyltetrahydrofolate = N-formyl-L-methionyl-tRNA(fMet) + (6S)-5,6,7,8-tetrahydrofolate + H(+). Its function is as follows. Attaches a formyl group to the free amino group of methionyl-tRNA(fMet). The formyl group appears to play a dual role in the initiator identity of N-formylmethionyl-tRNA by promoting its recognition by IF2 and preventing the misappropriation of this tRNA by the elongation apparatus. In Nitratiruptor sp. (strain SB155-2), this protein is Methionyl-tRNA formyltransferase.